The sequence spans 328 residues: Glycerol-3-phosphate dehydrogenase [NAD(P)+] (328 aa).

NADPH-binding residues include Trp11, Arg30, and Lys103. Sn-glycerol 3-phosphate contacts are provided by Lys103, Gly132, and Ser134. An NADPH-binding site is contributed by Ala136. 5 residues coordinate sn-glycerol 3-phosphate: Lys187, Asp240, Ser250, Arg251, and Asn252. Lys187 functions as the Proton acceptor in the catalytic mechanism. Arg251 contacts NADPH. Positions 275 and 277 each coordinate NADPH.

It belongs to the NAD-dependent glycerol-3-phosphate dehydrogenase family.

The protein localises to the cytoplasm. The enzyme catalyses sn-glycerol 3-phosphate + NAD(+) = dihydroxyacetone phosphate + NADH + H(+). The catalysed reaction is sn-glycerol 3-phosphate + NADP(+) = dihydroxyacetone phosphate + NADPH + H(+). The protein operates within membrane lipid metabolism; glycerophospholipid metabolism. Its function is as follows. Catalyzes the reduction of the glycolytic intermediate dihydroxyacetone phosphate (DHAP) to sn-glycerol 3-phosphate (G3P), the key precursor for phospholipid synthesis. This is Glycerol-3-phosphate dehydrogenase [NAD(P)+] from Aromatoleum aromaticum (strain DSM 19018 / LMG 30748 / EbN1) (Azoarcus sp. (strain EbN1)).